The primary structure comprises 58 residues: ATP synthase F(0) complex subunit k, mitochondrial (58 aa).

An N6-acetyllysine mark is found at Lys-16 and Lys-17. Residues 23-45 (TLTGRMNCVLATYGGIALLVLYF) form a helical membrane-spanning segment.

Component of the ATP synthase complex composed at least of ATP5F1A/subunit alpha, ATP5F1B/subunit beta, ATP5MC1/subunit c (homooctomer), MT-ATP6/subunit a, MT-ATP8/subunit 8, ATP5ME/subunit e, ATP5MF/subunit f, ATP5MG/subunit g, ATP5MK/subunit k, ATP5MJ/subunit j, ATP5F1C/subunit gamma, ATP5F1D/subunit delta, ATP5F1E/subunit epsilon, ATP5PF/subunit F6, ATP5PB/subunit b, ATP5PD/subunit d, ATP5PO/subunit OSCP. ATP synthase complex consists of a soluble F(1) head domain (subunits alpha(3) and beta(3)) - the catalytic core - and a membrane F(0) domain - the membrane proton channel (subunits c, a, 8, e, f, g, k and j). These two domains are linked by a central stalk (subunits gamma, delta, and epsilon) rotating inside the F1 region and a stationary peripheral stalk (subunits F6, b, d, and OSCP). The ATP synthase complex/complex V exists as a monomeric and a dimeric supercomplex that helps shape mitochondrial cristae to optimize proton flow.

The protein localises to the mitochondrion membrane. Its function is as follows. Subunit k, of the mitochondrial membrane ATP synthase complex (F(1)F(0) ATP synthase or Complex V) that produces ATP from ADP in the presence of a proton gradient across the membrane which is generated by electron transport complexes of the respiratory chain. ATP synthase complex consist of a soluble F(1) head domain - the catalytic core - and a membrane F(1) domain - the membrane proton channel. These two domains are linked by a central stalk rotating inside the F(1) region and a stationary peripheral stalk. During catalysis, ATP synthesis in the catalytic domain of F(1) is coupled via a rotary mechanism of the central stalk subunits to proton translocation. In vivo, can only synthesize ATP although its ATP hydrolase activity can be activated artificially in vitro. Part of the complex F(0) domain. Required for dimerization of the ATP synthase complex and as such regulates ATP synthesis in the mitochondria. In Mus musculus (Mouse), this protein is ATP synthase F(0) complex subunit k, mitochondrial.